An 894-amino-acid polypeptide reads, in one-letter code: Myb-like protein K (894 aa).

Residues 93-139 (LQQQQQSPVTNVATNTPPTLQHSISSPSPNNFNNNNNANNQFLSPNS) show a composition bias toward low complexity. Disordered regions lie at residues 93 to 221 (LQQQ…SASS), 299 to 353 (QVGN…QPIT), 492 to 539 (QQQQ…LEMI), and 601 to 659 (AATT…HWTS). Polar residues predominate over residues 140-149 (PQVAKSSPSQ). Over residues 150 to 221 (NNPSTPIANT…SQSLNSSASS (72 aa)) the composition is skewed to low complexity. Polar residues predominate over residues 300–309 (VGNPMQQSND). Composition is skewed to low complexity over residues 310–353 (MQPQ…QPIT) and 492–527 (QQQQ…PQQM). Composition is skewed to basic and acidic residues over residues 611-640 (GKEE…SKKD) and 649-659 (ASKEKTSHWTS). The HTH myb-type domain maps to 649-704 (ASKEKTSHWTSEEHNKFLEAVQQFGIKDYHAIAKFVQTRNHHQVRTHVNTYLKNQK). Positions 677–700 (YHAIAKFVQTRNHHQVRTHVNTYL) form a DNA-binding region, H-T-H motif. Residues 703-852 (QKKAEAATSS…EYNSGFDSNS (150 aa)) are disordered. Low complexity-rich tracts occupy residues 710 to 742 (TSST…QPPI), 751 to 805 (QQQQ…QQPQ), and 815 to 845 (PPNN…NEYN).

The protein resides in the nucleus. This is Myb-like protein K (mybK) from Dictyostelium discoideum (Social amoeba).